The following is a 202-amino-acid chain: Endoribonuclease YbeY (202 aa).

3 residues coordinate Zn(2+): histidine 120, histidine 124, and histidine 130.

The protein belongs to the endoribonuclease YbeY family. Requires Zn(2+) as cofactor.

It localises to the cytoplasm. Single strand-specific metallo-endoribonuclease involved in late-stage 70S ribosome quality control and in maturation of the 3' terminus of the 16S rRNA. This chain is Endoribonuclease YbeY, found in Corynebacterium kroppenstedtii (strain DSM 44385 / JCM 11950 / CIP 105744 / CCUG 35717).